The following is a 453-amino-acid chain: Secreted aspartic protease 10 (453 aa).

Residues 1–20 (MDLVIMNFVFLLYLTSVVKC) form the signal peptide. The 321-residue stretch at 52–372 (YTTELEIGSN…DLQDMTISVA (321 aa)) folds into the Peptidase A1 domain. Aspartate 70 is a catalytic residue. 70 to 72 (DTG) is a binding site for pepstatin A. A disulfide bridge links cysteine 85 with cysteine 112. N-linked (GlcNAc...) asparagine glycosylation is found at asparagine 115 and asparagine 128. 138–139 (VD) is a pepstatin A binding site. Asparagine 168, asparagine 208, asparagine 211, and asparagine 245 each carry an N-linked (GlcNAc...) asparagine glycan. Aspartate 266 is a catalytic residue. Pepstatin A is bound at residue 266–270 (DTGST). An N-linked (GlcNAc...) asparagine glycan is attached at asparagine 287. Cysteine 301 and cysteine 333 are disulfide-bonded. The interval 387-432 (NPNEDQNEVPTSTSFTQSASSSGSQPSSTISGENMDKNTTSSSSGN) is disordered. The segment covering 397 to 417 (TSTSFTQSASSSGSQPSSTIS) has biased composition (low complexity). Residues 423-432 (KNTTSSSSGN) show a composition bias toward polar residues. Asparagine 424 carries an N-linked (GlcNAc...) asparagine glycan. Serine 429 carries the GPI-anchor amidated serine lipid modification. Positions 430 to 453 (SGNCQTRSWIAILSALFLVYIHII) are cleaved as a propeptide — removed in mature form.

This sequence belongs to the peptidase A1 family. Post-translationally, the GPI-anchor is attached to the protein in the endoplasmic reticulum and serves to target the protein to the cell surface. There, the glucosamine-inositol phospholipid moiety is cleaved off and the GPI-modified mannoprotein is covalently attached via its lipidless GPI glycan remnant to the 1,6-beta-glucan of the outer cell wall layer.

Its subcellular location is the secreted. The protein localises to the cell membrane. The enzyme catalyses Preferential cleavage at the carboxyl of hydrophobic amino acids, but fails to cleave 15-Leu-|-Tyr-16, 16-Tyr-|-Leu-17 and 24-Phe-|-Phe-25 of insulin B chain. Activates trypsinogen, and degrades keratin.. Secreted aspartic peptidases (SAPs) are a group of ten acidic hydrolases considered as key virulence factors. These enzymes supply the fungus with nutrient amino acids as well as are able to degrade the selected host's proteins involved in the immune defense. Required for cell surface integrity and cell separation during budding. In Candida albicans (strain SC5314 / ATCC MYA-2876) (Yeast), this protein is Secreted aspartic protease 10.